A 334-amino-acid polypeptide reads, in one-letter code: ELMO domain-containing protein 1 (334 aa).

The ELMO domain maps to 133-314 (QHEEMLLKLW…KFRKRIIKQL (182 aa)).

Acts as a GTPase-activating protein (GAP) toward guanine nucleotide exchange factors like ARL2, ARL3, ARF1 and ARF6, but not for GTPases outside the Arf family. This Homo sapiens (Human) protein is ELMO domain-containing protein 1 (ELMOD1).